The sequence spans 326 residues: DnaJ homolog subfamily B member 6 (326 aa).

Residues 3 to 69 (DYYEVLGVQK…KKRDIYDRFG (67 aa)) form the J domain. Residues 249 to 326 (ALPFQPTNTR…KKKKSTKGSY (78 aa)) form a disordered region. Serine 277 bears the Phosphoserine mark.

In terms of assembly, homooligomer.

The protein resides in the cytoplasm. Its subcellular location is the perinuclear region. The protein localises to the nucleus. Its function is as follows. Has a stimulatory effect on the ATPase activity of HSP70 in a dose-dependent and time-dependent manner and hence acts as a co-chaperone of HSP70. Plays an indispensable role in the organization of KRT8/KRT18 filaments. Acts as an endogenous molecular chaperone for neuronal proteins including huntingtin. Suppresses aggregation and toxicity of polyglutamine-containing, aggregation-prone proteins. Also reduces cellular toxicity and caspase-3 activity. This Gallus gallus (Chicken) protein is DnaJ homolog subfamily B member 6.